Consider the following 274-residue polypeptide: Bis(5'-nucleosyl)-tetraphosphatase, symmetrical (274 aa).

Belongs to the Ap4A hydrolase family.

The catalysed reaction is P(1),P(4)-bis(5'-adenosyl) tetraphosphate + H2O = 2 ADP + 2 H(+). Its function is as follows. Hydrolyzes diadenosine 5',5'''-P1,P4-tetraphosphate to yield ADP. The polypeptide is Bis(5'-nucleosyl)-tetraphosphatase, symmetrical (Shewanella oneidensis (strain ATCC 700550 / JCM 31522 / CIP 106686 / LMG 19005 / NCIMB 14063 / MR-1)).